The following is a 665-amino-acid chain: Sodium/glucose cotransporter 1 (665 aa).

Residues 1 to 24 lie on the Extracellular side of the membrane; it reads MDSSTLSPAVTATDAPIPSYERIR. Residues 25–47 form a helical membrane-spanning segment; sequence NAADISVIVIYFVVVMAVGLWAM. The Cytoplasmic segment spans residues 48-66; that stretch reads FSTNRGTVGGFFLAGRSMV. A helical transmembrane segment spans residues 67–90; that stretch reads WWPIGASLFASNIGSGHFVGLAGT. Topologically, residues 91 to 95 are extracellular; it reads GAAAG. A helical membrane pass occupies residues 96 to 117; it reads IAMGGFEWNALVLVVVLGWIFV. Residues 118 to 139 are Cytoplasmic-facing; that stretch reads PIYIKAGVVTMPEYLRKRFGGK. A helical transmembrane segment spans residues 140–169; it reads RIQIYLSVLSLLLYIFTKISADIFSGAIFI. At 170–176 the chain is on the extracellular side; it reads NLALGLD. The chain crosses the membrane as a helical span at residues 177–193; the sequence is IYLAIFILLAITALYTI. Residues 194 to 202 are Cytoplasmic-facing; it reads TGGLAAVIY. Residues 203-221 traverse the membrane as a helical segment; that stretch reads TDTLQTAIMLVGSFILTGF. Over 222 to 275 the chain is Extracellular; that stretch reads AFNEVGGYEAFMDKYMKAIPTKVSNGNFTAKEECYTPRADSFHIFRDPITGDMP. Residue asparagine 248 is glycosylated (N-linked (GlcNAc...) asparagine). Cystine bridges form between cysteine 255–cysteine 511, cysteine 255–cysteine 611, cysteine 345–cysteine 351, cysteine 355–cysteine 361, and cysteine 517–cysteine 522. The helical transmembrane segment at 276–295 threads the bilayer; it reads WPGLIFGLAILALWYWCTDQ. Topologically, residues 296–309 are cytoplasmic; it reads VIVQRCLSAKNMSH. Residues 310-331 form a helical membrane-spanning segment; that stretch reads VKADCTLCGYLKLLPMFLMVMP. At 332-375 the chain is on the extracellular side; that stretch reads GMISRILYTEKIACVLPEECQKYCGTPVGCTNIAYPTLVVELMP. A helical membrane pass occupies residues 376–406; that stretch reads NGLRGLMLSVMMASLMSSLTSIFNSASTLFT. The Cytoplasmic segment spans residues 407-422; the sequence is MDIYTKIRKKASEKEL. The helical transmembrane segment at 423–444 threads the bilayer; sequence MIAGRLFILVLIGISIAWVPIV. The Extracellular portion of the chain corresponds to 445 to 451; that stretch reads QSAQSGQ. The chain crosses the membrane as a helical span at residues 452–477; sequence LFDYIQSITSYLGPPIAAVFLLAIFC. Glutamine 457 is a binding site for D-glucose. Residues 478 to 481 lie on the Cytoplasmic side of the membrane; that stretch reads KRVN. The helical transmembrane segment at 482 to 504 threads the bilayer; that stretch reads EQGAFWGLILGFLIGISRMITEF. The Extracellular segment spans residues 505–525; sequence AYGTGSCMEPSNCPKIICGVH. A helical transmembrane segment spans residues 526–547; the sequence is YLYFAIILFVISVITILIISFL. The Cytoplasmic portion of the chain corresponds to 548-645; sequence TKPIPDVHLY…TSEKPLWRTV (98 aa). The residue at position 585 (serine 585) is a Phosphoserine. Threonine 588 is modified (phosphothreonine). A helical membrane pass occupies residues 646-663; it reads VNINGIILLAVAVFCHAY. The Extracellular segment spans residues 664–665; the sequence is FA.

Belongs to the sodium:solute symporter (SSF) (TC 2.A.21) family. In terms of processing, N-glycosylation is not necessary for the cotransporter function. Expressed in enterocytes and enteroendocrine cells of small intestine (at protein level). Expressed in S3 segments of renal proximal tubules (at protein level). Expressed in endometrial glandular and epithelial cells (at protein level).

The protein resides in the apical cell membrane. It catalyses the reaction D-glucose(out) + 2 Na(+)(out) = D-glucose(in) + 2 Na(+)(in). The catalysed reaction is D-galactose(out) + 2 Na(+)(out) = D-galactose(in) + 2 Na(+)(in). With respect to regulation, enhanced by the interaction with PDZK1IP1/MAP17; but unlike SLC5A2/SGLT2, PDZK1IP1 is not essential for SLC5A1 transporter activity. Possibly modulated by cholesterol binding. Its function is as follows. Electrogenic Na(+)-coupled sugar symporter that actively transports D-glucose or D-galactose at the plasma membrane, with a Na(+) to sugar coupling ratio of 2:1. Transporter activity is driven by a transmembrane Na(+) electrochemical gradient set by the Na(+)/K(+) pump. Has a primary role in the transport of dietary monosaccharides from enterocytes to blood. Responsible for the absorption of D-glucose or D-galactose across the apical brush-border membrane of enterocytes, whereas basolateral exit is provided by GLUT2. Additionally, functions as a D-glucose sensor in enteroendocrine cells, triggering the secretion of the incretins GCG and GIP that control food intake and energy homeostasis. Together with SGLT2, functions in reabsorption of D-glucose from glomerular filtrate, playing a nonredundant role in the S3 segment of the proximal tubules. Transports D-glucose into endometrial epithelial cells, controlling glycogen synthesis and nutritional support for the embryo as well as the decidual transformation of endometrium prior to conception. Acts as a water channel enabling passive water transport in response to the osmotic gradient created upon sugar and Na(+) uptake. Has high water conductivity comparable to aquaporins and therefore is expected to play an important role in transepithelial water permeability, especially in the small intestine. In Mus musculus (Mouse), this protein is Sodium/glucose cotransporter 1 (Slc5a1).